The chain runs to 379 residues: Adenylosuccinate synthetase (379 aa).

GTP is bound by residues 11–17 and 39–41; these read GDEGKGK and GHT. The active-site Proton acceptor is the D12. Mg(2+) contacts are provided by D12 and G39. IMP is bound by residues 12–15, 37–40, T127, R141, Q223, T238, and R302; these read DEGK and NAGH. Residue H40 is the Proton donor of the active site. 298-304 serves as a coordination point for substrate; the sequence is TTTGRGR. GTP-binding positions include R304 and 330 to 332; that span reads KLD.

It belongs to the adenylosuccinate synthetase family. As to quaternary structure, homodimer. Mg(2+) serves as cofactor.

It localises to the cytoplasm. It catalyses the reaction IMP + L-aspartate + GTP = N(6)-(1,2-dicarboxyethyl)-AMP + GDP + phosphate + 2 H(+). Its pathway is purine metabolism; AMP biosynthesis via de novo pathway; AMP from IMP: step 1/2. Plays an important role in the de novo pathway of purine nucleotide biosynthesis. Catalyzes the first committed step in the biosynthesis of AMP from IMP. The polypeptide is Adenylosuccinate synthetase (Methanosarcina mazei (strain ATCC BAA-159 / DSM 3647 / Goe1 / Go1 / JCM 11833 / OCM 88) (Methanosarcina frisia)).